Reading from the N-terminus, the 570-residue chain is Hydroxylamine reductase (570 aa).

4 residues coordinate [4Fe-4S] cluster: C5, C8, C17, and C23. H266, E290, C334, C425, C453, C478, E513, and K515 together coordinate hybrid [4Fe-2O-2S] cluster. C425 is subject to Cysteine persulfide.

Belongs to the HCP family. [4Fe-4S] cluster is required as a cofactor. The cofactor is hybrid [4Fe-2O-2S] cluster.

It is found in the cytoplasm. The enzyme catalyses A + NH4(+) + H2O = hydroxylamine + AH2 + H(+). Functionally, catalyzes the reduction of hydroxylamine to form NH(3) and H(2)O. The chain is Hydroxylamine reductase from Clostridium botulinum (strain Okra / Type B1).